The following is a 183-amino-acid chain: SAYSvFN domain-containing protein 1 (183 aa).

Over 1 to 105 (MEQRLAEFRA…SFLTNITFLK (105 aa)) the chain is Cytoplasmic. A disordered region spans residues 11–36 (ARKRAGLAAQPPAASQGAQTPGEKAE). The segment covering 16-36 (GLAAQPPAASQGAQTPGEKAE) has biased composition (low complexity). Residues 91–105 (SCWDQSFLTNITFLK) form a middle helical (MH) region. Positions 106 to 126 (VLLWLVLLGLFVELEFGLAYF) form an intramembrane region, helical. Residues 127–183 (VLSLFYWMYVGTRGPEEKKEGEKSAYSVFNPGCEAIQGTLTAEQLERELQLRPLAGR) are Cytoplasmic-facing.

The protein belongs to the SAYSD1 family. As to quaternary structure, associates (via N-terminus) with ribosomes.

It is found in the endoplasmic reticulum membrane. It localises to the cytoplasmic vesicle membrane. Its function is as follows. Ufmylation 'reader' component of a translocation-associated quality control pathway, a mechanism that takes place when a ribosome has stalled during translation, and which is required to degrade clogged substrates. Specifically recognizes and binds ufmylated ribosomes when a ribosome has stalled, promoting the transport of stalled nascent chain via the TRAPP complex to lysosomes for degradation. In Homo sapiens (Human), this protein is SAYSvFN domain-containing protein 1.